We begin with the raw amino-acid sequence, 142 residues long: Phosphoribosyl-AMP cyclohydrolase (142 aa).

Position 92 (Asp92) interacts with Mg(2+). Residue Cys93 participates in Zn(2+) binding. Residues Asp94 and Asp96 each contribute to the Mg(2+) site. The Zn(2+) site is built by Cys109 and Cys116.

It belongs to the PRA-CH family. As to quaternary structure, homodimer. Mg(2+) is required as a cofactor. Requires Zn(2+) as cofactor.

The protein localises to the cytoplasm. It catalyses the reaction 1-(5-phospho-beta-D-ribosyl)-5'-AMP + H2O = 1-(5-phospho-beta-D-ribosyl)-5-[(5-phospho-beta-D-ribosylamino)methylideneamino]imidazole-4-carboxamide. It participates in amino-acid biosynthesis; L-histidine biosynthesis; L-histidine from 5-phospho-alpha-D-ribose 1-diphosphate: step 3/9. In terms of biological role, catalyzes the hydrolysis of the adenine ring of phosphoribosyl-AMP. The polypeptide is Phosphoribosyl-AMP cyclohydrolase (Halorhodospira halophila (strain DSM 244 / SL1) (Ectothiorhodospira halophila (strain DSM 244 / SL1))).